An 834-amino-acid chain; its full sequence is Leucine--tRNA ligase (834 aa).

Residues Pro42 to His52 carry the 'HIGH' region motif. The short motif at Lys619–Ser623 is the 'KMSKS' region element. Lys622 contributes to the ATP binding site.

The protein belongs to the class-I aminoacyl-tRNA synthetase family.

It is found in the cytoplasm. It catalyses the reaction tRNA(Leu) + L-leucine + ATP = L-leucyl-tRNA(Leu) + AMP + diphosphate. The polypeptide is Leucine--tRNA ligase (Actinobacillus pleuropneumoniae serotype 7 (strain AP76)).